The chain runs to 267 residues: Neutrophil elastase (267 aa).

The signal sequence occupies residues Met-1–Ala-27. Residues Ser-28–Glu-29 constitute a propeptide that is removed on maturation. Positions Ile-30 to Gln-247 constitute a Peptidase S1 domain. An intrachain disulfide couples Cys-55 to Cys-71. The active-site Charge relay system is His-70. N-linked (GlcNAc...) asparagine glycosylation is present at Asn-88. Asp-117 (charge relay system) is an active-site residue. N-linked (GlcNAc...) asparagine glycosylation is found at Asn-124 and Asn-173. Intrachain disulfides connect Cys-151-Cys-208, Cys-181-Cys-187, and Cys-198-Cys-223. The active-site Charge relay system is Ser-202.

Belongs to the peptidase S1 family. Elastase subfamily. Interacts with NOTCH2NL. Interacts with agaphelin, an antihemostatic protein from Anopheles gambiae. Bone marrow cells. Neutrophil.

The protein localises to the cytoplasmic vesicle. Its subcellular location is the phagosome. The catalysed reaction is Hydrolysis of proteins, including elastin. Preferential cleavage: Val-|-Xaa &gt; Ala-|-Xaa.. Its function is as follows. Serine protease that modifies the functions of natural killer cells, monocytes and granulocytes. Inhibits C5a-dependent neutrophil enzyme release and chemotaxis. Promotes cleavage of GSDMB, thereby inhibiting pyroptosis. Promotes blood coagulation. Through the activation of the platelet fibrinogen receptor integrin alpha-IIb/beta-3, potentiates platelet aggregation induced by a threshold concentration of cathepsin G (CTSG). Cleaves and thus inactivates tissue factor pathway inhibitor (TFPI). Capable of killing E.coli but not S.aureus in vitro; digests outer membrane protein A (ompA) in E.coli and K.pneumoniae. The sequence is that of Neutrophil elastase (ELANE) from Homo sapiens (Human).